The following is a 639-amino-acid chain: Probable methyltransferase PMT18 (639 aa).

At 1–19 (MAKENSSHSLAEAKRKRLT) the chain is on the cytoplasmic side. A helical; Signal-anchor for type II membrane protein transmembrane segment spans residues 20-42 (WILCVSGLCILSYVLGSWQTNTV). Residues 41 to 86 (TVPTSSSEAYSRMGCDETSTTTRAQTTQTQTNPSSDDTSSSLSSSE) are disordered. Residues 43–639 (PTSSSEAYSR…VKSYWTGPSS (597 aa)) are Lumenal-facing. Positions 58–85 (TSTTTRAQTTQTQTNPSSDDTSSSLSSS) are enriched in low complexity. 2 N-linked (GlcNAc...) asparagine glycosylation sites follow: Asn104 and Asn427.

Belongs to the methyltransferase superfamily.

The protein localises to the endoplasmic reticulum membrane. In Arabidopsis thaliana (Mouse-ear cress), this protein is Probable methyltransferase PMT18.